A 354-amino-acid polypeptide reads, in one-letter code: Dihydroorotate dehydrogenase (quinone) (354 aa).

FMN is bound by residues 61 to 65 and A85; that span reads AGYDK. K65 contributes to the substrate binding site. Substrate is bound at residue 110–114; sequence NRFGF. FMN is bound by residues N139 and N170. N170 is a binding site for substrate. S173 serves as the catalytic Nucleophile. N175 contacts substrate. 2 residues coordinate FMN: K211 and T239. 240-241 serves as a coordination point for substrate; sequence NT. FMN-binding positions include G261, G290, and 311 to 312; that span reads YT.

Belongs to the dihydroorotate dehydrogenase family. Type 2 subfamily. As to quaternary structure, monomer. It depends on FMN as a cofactor.

The protein resides in the cell membrane. The enzyme catalyses (S)-dihydroorotate + a quinone = orotate + a quinol. It functions in the pathway pyrimidine metabolism; UMP biosynthesis via de novo pathway; orotate from (S)-dihydroorotate (quinone route): step 1/1. Its function is as follows. Catalyzes the conversion of dihydroorotate to orotate with quinone as electron acceptor. The protein is Dihydroorotate dehydrogenase (quinone) of Cereibacter sphaeroides (strain KD131 / KCTC 12085) (Rhodobacter sphaeroides).